Reading from the N-terminus, the 1481-residue chain is Structural protein ORF147 (1481 aa).

Disordered stretches follow at residues 65–88 (AEKRAEITKGSQKKSNSSSSENLE) and 1319–1403 (DEKL…PPIP). 3 stretches are compositionally biased toward low complexity: residues 73 to 84 (KGSQKKSNSSSS), 1323 to 1336 (SSTVSSSSSSSPKT), and 1393 to 1403 (SSRTTITPPIP).

It is found in the virion. This is Structural protein ORF147 from Noctuidae (owlet moths).